The primary structure comprises 232 residues: Thiamine import ATP-binding protein ThiQ (232 aa).

One can recognise an ABC transporter domain in the interval 2–230 (LKLTDITWLY…KASASAILGI (229 aa)). 32–39 (GPSGAGKS) is a binding site for ATP.

Belongs to the ABC transporter superfamily. Thiamine importer (TC 3.A.1.19.1) family. As to quaternary structure, the complex is composed of two ATP-binding proteins (ThiQ), two transmembrane proteins (ThiP) and a solute-binding protein (ThiB).

It is found in the cell inner membrane. The enzyme catalyses thiamine(out) + ATP + H2O = thiamine(in) + ADP + phosphate + H(+). Part of the ABC transporter complex ThiBPQ involved in thiamine import. Responsible for energy coupling to the transport system. This is Thiamine import ATP-binding protein ThiQ from Shigella flexneri serotype 5b (strain 8401).